A 356-amino-acid polypeptide reads, in one-letter code: MIETDKLAAERIIAATPASSHEEAFERALRPRQLDEYVGQEKVRDQLEIFIEAAKRRAEALDHVLLFGPPGLGKTTLAHIIAREMGVNLRQTSGPVLERAGDLAALLTNLEANDVLFIDEIHRLSPVVEEILYPALEDYQIDIMIGEGPAARSVKLDLQPFTLVGATTRAGMLTNPLRDRFGIVARLEFYDAEQLSRIVRRSAALLNAQIDPAGALEIAKRSRGTPRIANRLLRRVRDYAEVKADGNITAAVADAALAMLDVDPVGFDLMDRKLLEAILHKFDGGPVGVDNLAAAIGEERDTIEDVLEPYLIQQGFLQRTPRGRVATLLTYRHFGLATPDAASPVRNLWDTPDAER.

Residues T4 to Y190 form a large ATPase domain (RuvB-L) region. ATP contacts are provided by residues L29, R30, G71, K74, T75, T76, E137–Y139, R180, Y190, and R227. Residue T75 coordinates Mg(2+). A small ATPAse domain (RuvB-S) region spans residues D191–D261. Residues P264–R356 form a head domain (RuvB-H) region. 3 residues coordinate DNA: R300, R319, and R324.

Belongs to the RuvB family. In terms of assembly, homohexamer. Forms an RuvA(8)-RuvB(12)-Holliday junction (HJ) complex. HJ DNA is sandwiched between 2 RuvA tetramers; dsDNA enters through RuvA and exits via RuvB. An RuvB hexamer assembles on each DNA strand where it exits the tetramer. Each RuvB hexamer is contacted by two RuvA subunits (via domain III) on 2 adjacent RuvB subunits; this complex drives branch migration. In the full resolvosome a probable DNA-RuvA(4)-RuvB(12)-RuvC(2) complex forms which resolves the HJ.

Its subcellular location is the cytoplasm. The enzyme catalyses ATP + H2O = ADP + phosphate + H(+). In terms of biological role, the RuvA-RuvB-RuvC complex processes Holliday junction (HJ) DNA during genetic recombination and DNA repair, while the RuvA-RuvB complex plays an important role in the rescue of blocked DNA replication forks via replication fork reversal (RFR). RuvA specifically binds to HJ cruciform DNA, conferring on it an open structure. The RuvB hexamer acts as an ATP-dependent pump, pulling dsDNA into and through the RuvAB complex. RuvB forms 2 homohexamers on either side of HJ DNA bound by 1 or 2 RuvA tetramers; 4 subunits per hexamer contact DNA at a time. Coordinated motions by a converter formed by DNA-disengaged RuvB subunits stimulates ATP hydrolysis and nucleotide exchange. Immobilization of the converter enables RuvB to convert the ATP-contained energy into a lever motion, pulling 2 nucleotides of DNA out of the RuvA tetramer per ATP hydrolyzed, thus driving DNA branch migration. The RuvB motors rotate together with the DNA substrate, which together with the progressing nucleotide cycle form the mechanistic basis for DNA recombination by continuous HJ branch migration. Branch migration allows RuvC to scan DNA until it finds its consensus sequence, where it cleaves and resolves cruciform DNA. This Burkholderia thailandensis (strain ATCC 700388 / DSM 13276 / CCUG 48851 / CIP 106301 / E264) protein is Holliday junction branch migration complex subunit RuvB.